Here is a 189-residue protein sequence, read N- to C-terminus: ADP-ribosylation factor H (189 aa).

Residues D34 to T40, D75 to Q79, and N134 to D137 contribute to the GTP site.

This sequence belongs to the small GTPase superfamily. Arf family.

It localises to the golgi apparatus. Its function is as follows. GTP-binding protein that may be involved in protein trafficking. May modulate vesicle budding and uncoating within the Golgi apparatus. This Dictyostelium discoideum (Social amoeba) protein is ADP-ribosylation factor H (arrH).